The sequence spans 131 residues: Small ribosomal subunit protein uS11 (131 aa).

Belongs to the universal ribosomal protein uS11 family. As to quaternary structure, part of the 30S ribosomal subunit. Interacts with proteins S7 and S18. Binds to IF-3.

Its function is as follows. Located on the platform of the 30S subunit, it bridges several disparate RNA helices of the 16S rRNA. Forms part of the Shine-Dalgarno cleft in the 70S ribosome. This Clostridium acetobutylicum (strain ATCC 824 / DSM 792 / JCM 1419 / IAM 19013 / LMG 5710 / NBRC 13948 / NRRL B-527 / VKM B-1787 / 2291 / W) protein is Small ribosomal subunit protein uS11.